The chain runs to 846 residues: Disks large-associated protein 5 (846 aa).

Ser67 bears the Phosphoserine; by CDK1 mark. Residues 90 to 120 (RKQMLQKYKEEKQLQKLKEQREKAKRGIFKV) adopt a coiled-coil conformation. Residues 153–284 (TRSKAKDQME…TNATSGMNPD (132 aa)) form a disordered region. 2 stretches are compositionally biased toward basic and acidic residues: residues 156–174 (KAKDQMEQTKIDNESDVRA) and 182–194 (TSEKKVSDKEKKV). The residue at position 202 (Ser202) is a Phosphoserine. Polar residues predominate over residues 203-225 (LRMTRSATQAAKQVPRTVSSTTA). Residues 250–266 (KNVETKPDKGISCKVDS) are compositionally biased toward basic and acidic residues. Polar residues predominate over residues 269 to 281 (NTLNSQTNATSGM). Residue Thr326 is modified to Phosphothreonine. A Phosphothreonine; by CDK1 modification is found at Thr329. Residue Thr338 is modified to Phosphothreonine. Lys347 is covalently cross-linked (Glycyl lysine isopeptide (Lys-Gly) (interchain with G-Cter in SUMO2)). Phosphothreonine; by CDK1 occurs at positions 401 and 402. Ser618 bears the Phosphoserine; by CDK1 mark. Position 627 is a phosphoserine; by AURKA (Ser627). The span at 628-671 (VSSEGPSQRLGTPKSVNKAVSQSRNEMGIPQQTTSPENAGPQNT) shows a compositional bias: polar residues. Positions 628-674 (VSSEGPSQRLGTPKSVNKAVSQSRNEMGIPQQTTSPENAGPQNTKSE) are disordered. Residues Ser629 and Ser634 each carry the phosphoserine modification. The residue at position 639 (Thr639) is a Phosphothreonine; by CDK1. Position 642 is a phosphoserine; by CDK1 (Ser642). Phosphoserine is present on Ser662. Phosphoserine; by AURKA occurs at positions 725 and 757. The residue at position 759 (Thr759) is a Phosphothreonine; by CDK1. A phosphoserine mark is found at Ser774 and Ser777. Position 784 is a phosphothreonine (Thr784). 2 positions are modified to phosphoserine: Ser806 and Ser812. Ser830 bears the Phosphoserine; by AURKA mark. Ser839 carries the phosphoserine; by CDK1 modification.

It belongs to the SAPAP family. As to quaternary structure, interacts with CDK1. Interacts with the C-terminal proline-rich region of FBXO7. Recruited by FBXO7 to a SCF (SKP1-CUL1-F-box) protein complex in a CDK1/Cyclin B-phosphorylation dependent manner. Interacts with CDH1. Post-translationally, ubiquitinated, leading to its degradation. Decreased phosphorylation levels are associated with the differentiation of intestinal epithelial cells. As to expression, abundantly expressed in fetal liver. Expressed at lower levels in bone marrow, testis, colon, and placenta.

Its subcellular location is the nucleus. It localises to the cytoplasm. It is found in the cytoskeleton. The protein localises to the spindle. Potential cell cycle regulator that may play a role in carcinogenesis of cancer cells. Mitotic phosphoprotein regulated by the ubiquitin-proteasome pathway. Key regulator of adherens junction integrity and differentiation that may be involved in CDH1-mediated adhesion and signaling in epithelial cells. This is Disks large-associated protein 5 (DLGAP5) from Homo sapiens (Human).